A 375-amino-acid chain; its full sequence is Putative F-box only protein 11 (375 aa).

Positions 1-46 (MVSVNLPWELVEEILCRVPPQSLVKFRTVCKQWNSLFDDNKFVNDH) constitute an F-box domain.

This is Putative F-box only protein 11 (FBX11) from Arabidopsis thaliana (Mouse-ear cress).